The following is a 176-amino-acid chain: MIDDDGYRPNVGIVICNRQGQVMWARRFGQHSWQFPQGGINPGESAEQAMYRELFEEVGLSRKDVRILASTRNWLRYKLPKRLVRWDTKPVCIGQKQKWFLLQLVSGDAEINMQTSSTPEFDGWRWVSYWYPVRQVVSFKRDVYRRVMKEFASVVMSLQENTPKPQNASAYRRKRG.

Residues 6 to 149 enclose the Nudix hydrolase domain; the sequence is GYRPNVGIVI…KRDVYRRVMK (144 aa). The Nudix box signature appears at 38 to 59; that stretch reads GGINPGESAEQAMYRELFEEVG.

This sequence belongs to the Nudix hydrolase family. RppH subfamily. The cofactor is a divalent metal cation.

Functionally, accelerates the degradation of transcripts by removing pyrophosphate from the 5'-end of triphosphorylated RNA, leading to a more labile monophosphorylated state that can stimulate subsequent ribonuclease cleavage. The polypeptide is RNA pyrophosphohydrolase (Shigella dysenteriae serotype 1 (strain Sd197)).